Consider the following 199-residue polypeptide: Probable nicotinate-nucleotide adenylyltransferase (199 aa).

This sequence belongs to the NadD family.

The catalysed reaction is nicotinate beta-D-ribonucleotide + ATP + H(+) = deamido-NAD(+) + diphosphate. The protein operates within cofactor biosynthesis; NAD(+) biosynthesis; deamido-NAD(+) from nicotinate D-ribonucleotide: step 1/1. Its function is as follows. Catalyzes the reversible adenylation of nicotinate mononucleotide (NaMN) to nicotinic acid adenine dinucleotide (NaAD). The protein is Probable nicotinate-nucleotide adenylyltransferase of Roseiflexus sp. (strain RS-1).